Consider the following 380-residue polypeptide: Large ribosomal subunit protein mL38 (380 aa).

Residues 1-26 (MAAPWWRAALCECRRWRGFSTSAVLG) constitute a mitochondrion transit peptide. Positions 99-127 (RTQQLLERKQAIQELRANVEEERAARLRT) form a coiled coil.

Belongs to the phosphatidylethanolamine-binding protein family. Mitochondrion-specific ribosomal protein mL38 subfamily. Component of the mitochondrial large ribosomal subunit (mt-LSU). Mature mammalian 55S mitochondrial ribosomes consist of a small (28S) and a large (39S) subunit. The 28S small subunit contains a 12S ribosomal RNA (12S mt-rRNA) and 30 different proteins. The 39S large subunit contains a 16S rRNA (16S mt-rRNA), a copy of mitochondrial valine transfer RNA (mt-tRNA(Val)), which plays an integral structural role, and 52 different proteins. mL38 is located at the central protuberance.

It localises to the mitochondrion. In Homo sapiens (Human), this protein is Large ribosomal subunit protein mL38 (MRPL38).